Reading from the N-terminus, the 297-residue chain is Tyrosine recombinase XerD (297 aa).

Residues 1 to 87 enclose the Core-binding (CB) domain; it reads MLEYAIEDFF…SIRSFHQFLI (87 aa). The region spanning 108-291 is the Tyr recombinase domain; it reads KLPDILSQDE…TKARLKDMYQ (184 aa). Catalysis depends on residues Arg-147, Lys-171, His-243, Arg-246, and His-269. Tyr-278 (O-(3'-phospho-DNA)-tyrosine intermediate) is an active-site residue.

This sequence belongs to the 'phage' integrase family. XerD subfamily. In terms of assembly, forms a cyclic heterotetrameric complex composed of two molecules of XerC and two molecules of XerD.

It is found in the cytoplasm. In terms of biological role, site-specific tyrosine recombinase, which acts by catalyzing the cutting and rejoining of the recombining DNA molecules. The XerC-XerD complex is essential to convert dimers of the bacterial chromosome into monomers to permit their segregation at cell division. It also contributes to the segregational stability of plasmids. The sequence is that of Tyrosine recombinase XerD from Oceanobacillus iheyensis (strain DSM 14371 / CIP 107618 / JCM 11309 / KCTC 3954 / HTE831).